We begin with the raw amino-acid sequence, 215 residues long: tRNA (guanine-N(7)-)-methyltransferase (215 aa).

4 residues coordinate S-adenosyl-L-methionine: Glu44, Glu69, Asp96, and Asp118. Residue Asp118 is part of the active site. Residues Lys122, Asp154, and 192-195 (TEYE) each bind substrate.

It belongs to the class I-like SAM-binding methyltransferase superfamily. TrmB family.

The enzyme catalyses guanosine(46) in tRNA + S-adenosyl-L-methionine = N(7)-methylguanosine(46) in tRNA + S-adenosyl-L-homocysteine. It functions in the pathway tRNA modification; N(7)-methylguanine-tRNA biosynthesis. Its function is as follows. Catalyzes the formation of N(7)-methylguanine at position 46 (m7G46) in tRNA. The polypeptide is tRNA (guanine-N(7)-)-methyltransferase (Levilactobacillus brevis (strain ATCC 367 / BCRC 12310 / CIP 105137 / JCM 1170 / LMG 11437 / NCIMB 947 / NCTC 947) (Lactobacillus brevis)).